A 263-amino-acid polypeptide reads, in one-letter code: Diphthine synthase (263 aa).

S-adenosyl-L-methionine-binding positions include Leu11, Asp89, Ala92, 117–118, Leu166, and Leu208; that span reads SV.

The protein belongs to the diphthine synthase family. In terms of assembly, homodimer.

It carries out the reaction 2-[(3S)-amino-3-carboxypropyl]-L-histidyl-[translation elongation factor 2] + 3 S-adenosyl-L-methionine = diphthine-[translation elongation factor 2] + 3 S-adenosyl-L-homocysteine + 3 H(+). The protein operates within protein modification; peptidyl-diphthamide biosynthesis. Its function is as follows. S-adenosyl-L-methionine-dependent methyltransferase that catalyzes the trimethylation of the amino group of the modified target histidine residue in translation elongation factor 2 (EF-2), to form an intermediate called diphthine. The three successive methylation reactions represent the second step of diphthamide biosynthesis. In Methanopyrus kandleri (strain AV19 / DSM 6324 / JCM 9639 / NBRC 100938), this protein is Diphthine synthase.